We begin with the raw amino-acid sequence, 159 residues long: Ribosomal RNA large subunit methyltransferase H (159 aa).

S-adenosyl-L-methionine contacts are provided by residues Leu76, Gly108, and 127 to 132 (FSNMTF).

It belongs to the RNA methyltransferase RlmH family. Homodimer.

Its subcellular location is the cytoplasm. The catalysed reaction is pseudouridine(1915) in 23S rRNA + S-adenosyl-L-methionine = N(3)-methylpseudouridine(1915) in 23S rRNA + S-adenosyl-L-homocysteine + H(+). Specifically methylates the pseudouridine at position 1915 (m3Psi1915) in 23S rRNA. This is Ribosomal RNA large subunit methyltransferase H from Staphylococcus epidermidis (strain ATCC 35984 / DSM 28319 / BCRC 17069 / CCUG 31568 / BM 3577 / RP62A).